Consider the following 529-residue polypeptide: Bifunctional purine biosynthesis protein PurH (529 aa).

Residues 1-148 enclose the MGS-like domain; the sequence is MNNARPIRRA…KNHKDVVIVV (148 aa).

This sequence belongs to the PurH family.

It catalyses the reaction (6R)-10-formyltetrahydrofolate + 5-amino-1-(5-phospho-beta-D-ribosyl)imidazole-4-carboxamide = 5-formamido-1-(5-phospho-D-ribosyl)imidazole-4-carboxamide + (6S)-5,6,7,8-tetrahydrofolate. The catalysed reaction is IMP + H2O = 5-formamido-1-(5-phospho-D-ribosyl)imidazole-4-carboxamide. It functions in the pathway purine metabolism; IMP biosynthesis via de novo pathway; 5-formamido-1-(5-phospho-D-ribosyl)imidazole-4-carboxamide from 5-amino-1-(5-phospho-D-ribosyl)imidazole-4-carboxamide (10-formyl THF route): step 1/1. Its pathway is purine metabolism; IMP biosynthesis via de novo pathway; IMP from 5-formamido-1-(5-phospho-D-ribosyl)imidazole-4-carboxamide: step 1/1. This Shewanella amazonensis (strain ATCC BAA-1098 / SB2B) protein is Bifunctional purine biosynthesis protein PurH.